Here is a 314-residue protein sequence, read N- to C-terminus: Deoxyribonuclease-1-like 1 (314 aa).

A signal peptide spans 1 to 37 (MPFGQPGFLWRVPDAHIAMRGLVMAPLLILLVGGTEA). N-linked (GlcNAc...) asparagine glycosylation occurs at asparagine 102. The active site involves glutamate 113. An N-linked (GlcNAc...) asparagine glycan is attached at asparagine 133. Residue histidine 164 is part of the active site. Cysteines 203 and 240 form a disulfide. Residue asparagine 239 is glycosylated (N-linked (GlcNAc...) asparagine).

Belongs to the DNase I family. Highly expressed in heart and skeletal muscles. Low expression in brain and thymus. Intermediated expression in other tissues.

It localises to the endoplasmic reticulum. In Mus musculus (Mouse), this protein is Deoxyribonuclease-1-like 1 (Dnase1l1).